The primary structure comprises 224 residues: Putative tyrosine-protein phosphatase OCA6 (224 aa).

At Thr-2 the chain carries Phosphothreonine. The Tyrosine-protein phosphatase domain maps to 8–170 (QFSTVQPNLY…FNSEIEVDDL (163 aa)). Cys-114 acts as the Phosphocysteine intermediate in catalysis.

The protein belongs to the protein-tyrosine phosphatase family.

The protein resides in the cytoplasm. It carries out the reaction O-phospho-L-tyrosyl-[protein] + H2O = L-tyrosyl-[protein] + phosphate. Required for replication of Brome mosaic virus (BMV). The protein is Putative tyrosine-protein phosphatase OCA6 (OCA6) of Saccharomyces cerevisiae (strain ATCC 204508 / S288c) (Baker's yeast).